Consider the following 151-residue polypeptide: uncharacterized protein (151 aa).

A Response regulatory domain is found at 2-133 (KTLIVEDNPK…VFVEAVHYSQ (132 aa)). Asp53 bears the 4-aspartylphosphate mark.

This is an uncharacterized protein from Sinorhizobium fredii (strain NBRC 101917 / NGR234).